We begin with the raw amino-acid sequence, 629 residues long: tRNA uridine 5-carboxymethylaminomethyl modification enzyme MnmG (629 aa).

13 to 18 is a binding site for FAD; the sequence is GGGHAG. 273 to 287 is an NAD(+) binding site; that stretch reads GPRYCPSIEDKIHRF.

The protein belongs to the MnmG family. Homodimer. Heterotetramer of two MnmE and two MnmG subunits. FAD is required as a cofactor.

It is found in the cytoplasm. Its function is as follows. NAD-binding protein involved in the addition of a carboxymethylaminomethyl (cmnm) group at the wobble position (U34) of certain tRNAs, forming tRNA-cmnm(5)s(2)U34. In Shewanella denitrificans (strain OS217 / ATCC BAA-1090 / DSM 15013), this protein is tRNA uridine 5-carboxymethylaminomethyl modification enzyme MnmG.